A 349-amino-acid chain; its full sequence is MTEFDNLTWLHGKPQGSGLLKANPEDFVVVEDLGFTPDGEGEHILLRILKNGCNTRFVADVLAKFLKIHAREVSFAGQKDKHAVTEQWLCARVPGKEMPDFSAFQLEGCKVLEYARHKRKLRLGALKGNAFTLVLREISDRRDVETRLQAIRDGGVPNYFGAQRFGIGGSNLQGALRWAQSNAPVRDRNKRSFWLSAARSALFNQIVHQRLKKPDFNQVVDGDALQLAGRGSWFVATSEELPELQRRVDEKELMITASLPGSGEWGTQRAALAFEQDAIAQETVLQSLLLREKVEASRRAMLLYPQQLSWNWWDDVTVELRFWLPAGSFATSVVRELINTMGDYAHIAE.

Residue phenylalanine 27 coordinates substrate. Aspartate 80 functions as the Nucleophile in the catalytic mechanism. Residue asparagine 129 participates in substrate binding. Residues 155–303 (GVPNYFGAQR…VEASRRAMLL (149 aa)) form the TRUD domain. Phenylalanine 329 is a substrate binding site.

The protein belongs to the pseudouridine synthase TruD family.

It carries out the reaction uridine(13) in tRNA = pseudouridine(13) in tRNA. Responsible for synthesis of pseudouridine from uracil-13 in transfer RNAs. This is tRNA pseudouridine synthase D from Salmonella typhi.